The following is a 263-amino-acid chain: Cell division coordinator CpoB (263 aa).

The first 26 residues, 1–26, serve as a signal peptide directing secretion; that stretch reads MSSNFRHQLLSLSLLVGIAAPWAAFA. Residues 44-88 are a coiled coil; sequence QLERISNAHSQLLTQLQQQLSDNQSDIDSLRGQIQENQYQLNQVV. The segment covering 106–123 has biased composition (low complexity); it reads AAAQSTSGDQSGAAASTT. The tract at residues 106 to 139 is disordered; sequence AAAQSTSGDQSGAAASTTPTADAGTANAGAPVKS. TPR repeat units lie at residues 143–176, 180–213, and 217–250; these read NTDY…YPDS, PNAN…YPKS, and ADAM…YPGT.

This sequence belongs to the CpoB family. In terms of assembly, homotrimer. Interacts directly with the central domain of TolA and with PBP1B. Binding to TolA disrupts the homotrimer to form a YbgF/TolA heterodimer with weak affinity. Forms a quaternary complex with PBP1B-LpoB and TolA.

Its subcellular location is the periplasm. Functionally, mediates coordination of peptidoglycan synthesis and outer membrane constriction during cell division. Promotes physical and functional coordination of the PBP1B-LpoB and Tol machines, and regulates PBP1B activity in response to Tol energy state. This is Cell division coordinator CpoB from Escherichia coli (strain K12).